The following is a 68-amino-acid chain: Large ribosomal subunit protein bL35 (68 aa).

This sequence belongs to the bacterial ribosomal protein bL35 family.

This chain is Large ribosomal subunit protein bL35, found in Rickettsia canadensis (strain McKiel).